The chain runs to 295 residues: Ribosomal RNA small subunit methyltransferase H (295 aa).

Residues 32–34 (GGY), D50, F77, D98, and Q105 each bind S-adenosyl-L-methionine. Positions 275–295 (KEISENTRSRSAKLRGIVKEE) are disordered.

Belongs to the methyltransferase superfamily. RsmH family.

Its subcellular location is the cytoplasm. The enzyme catalyses cytidine(1402) in 16S rRNA + S-adenosyl-L-methionine = N(4)-methylcytidine(1402) in 16S rRNA + S-adenosyl-L-homocysteine + H(+). Specifically methylates the N4 position of cytidine in position 1402 (C1402) of 16S rRNA. This chain is Ribosomal RNA small subunit methyltransferase H, found in Anaplasma phagocytophilum (strain HZ).